Reading from the N-terminus, the 326-residue chain is Ankyrin repeat domain-containing protein 9 (326 aa).

Residues 1–20 are disordered; it reads MPWDTRPGRSANGGPEGPGA. The stretch at 70 to 99 is one ANK 1 repeat; it reads SPSEALLYALVHDHQAYAHYLLATFPRCAL. Residues 108–109 carry the Important role in both nutrient sensing and binding/regulation of IMPDH2 motif; that stretch reads CC. ANK repeat units lie at residues 111-140 and 157-186; these read APGP…DFPV and GGGT…SPGL.

As to quaternary structure, part of an E3 ubiquitin-protein ligase complex with Elongin BC (ELOB and ELOC), CUL5 and ANKRD9. Interacts with IMPDH2; leading to ubiquitination of IMPDH2 and its subsequent proteasomal degradation.

It localises to the cytoplasmic vesicle. Its subcellular location is the cytoplasm. It is found in the cytosol. The protein operates within protein modification; protein ubiquitination. Functionally, substrate receptor subunit of a cullin-RING superfamily E3 ligase complex (CUL5-based E3 ubiquitin ligase complex) which mediates the ubiquitination and subsequent proteasomal degradation of target proteins. Depending of the metabolic state of the cell, promotes the proteasomal degradation of IMPDH2, the rate-limiting enzyme in GTP biosynthesis or protects IMPDH2 by stabilizing IMPDH2 filaments assembly. Implicated in different cellular processes, like copper homeostasis and cell proliferation. The polypeptide is Ankyrin repeat domain-containing protein 9 (Ankrd9) (Mus musculus (Mouse)).